The primary structure comprises 345 residues: Phosphoribosylformylglycinamidine cyclo-ligase (345 aa).

The protein belongs to the AIR synthase family.

The protein localises to the cytoplasm. It carries out the reaction 2-formamido-N(1)-(5-O-phospho-beta-D-ribosyl)acetamidine + ATP = 5-amino-1-(5-phospho-beta-D-ribosyl)imidazole + ADP + phosphate + H(+). Its pathway is purine metabolism; IMP biosynthesis via de novo pathway; 5-amino-1-(5-phospho-D-ribosyl)imidazole from N(2)-formyl-N(1)-(5-phospho-D-ribosyl)glycinamide: step 2/2. In Escherichia coli O45:K1 (strain S88 / ExPEC), this protein is Phosphoribosylformylglycinamidine cyclo-ligase.